A 278-amino-acid polypeptide reads, in one-letter code: 4-deoxy-L-threo-5-hexosulose-uronate ketol-isomerase (278 aa).

H196, H198, E203, and H245 together coordinate Zn(2+).

It belongs to the KduI family. Homohexamer. It depends on Zn(2+) as a cofactor.

It carries out the reaction 5-dehydro-4-deoxy-D-glucuronate = 3-deoxy-D-glycero-2,5-hexodiulosonate. Its pathway is glycan metabolism; pectin degradation; 2-dehydro-3-deoxy-D-gluconate from pectin: step 4/5. Functionally, catalyzes the isomerization of 5-dehydro-4-deoxy-D-glucuronate to 3-deoxy-D-glycero-2,5-hexodiulosonate. The chain is 4-deoxy-L-threo-5-hexosulose-uronate ketol-isomerase from Escherichia coli (strain K12 / MC4100 / BW2952).